Reading from the N-terminus, the 387-residue chain is tRNA pseudouridine synthase B (387 aa).

Residue Asp-43 is the Nucleophile of the active site.

Belongs to the pseudouridine synthase TruB family. Type 1 subfamily.

It carries out the reaction uridine(55) in tRNA = pseudouridine(55) in tRNA. Its function is as follows. Responsible for synthesis of pseudouridine from uracil-55 in the psi GC loop of transfer RNAs. The protein is tRNA pseudouridine synthase B of Bifidobacterium longum subsp. infantis (strain ATCC 15697 / DSM 20088 / JCM 1222 / NCTC 11817 / S12).